The following is a 689-amino-acid chain: Centrosomal protein of 78 kDa (689 aa).

Ser325 and Ser327 each carry phosphoserine. Disordered regions lie at residues 432-451 (SSEV…VPEK), 563-589 (PQMT…EPKQ), and 614-689 (DSFP…TESH). A coiled-coil region spans residues 450–505 (EKTSIEQEALQEKLEECLKQLKEERVIRLKVDKRVSELEHENAQLRNINFSLSEAL). Basic and acidic residues-rich tracts occupy residues 573–587 (PKEE…KPEP) and 666–689 (QRKE…TESH).

It belongs to the CEP78 family. Interacts with PLK4. Interacts with FAM161A. Interacts with IFT20; regulating IFT20 stability and localization. Interacts with TTC21A; regulating TTC21A stability and localization. Interacts with USP16; promoting USP16-dependent deubiquitination of tektins. Interacts with DCAF1/VPRBP; promoting localization of the EDVP complex to centrosomes. Interacts with CEP350; promoting CEP78 localization to centrosome and centriole. Widely expressed. Expressed in different retinal cell types with higher expression in cone compared to rod cells (at protein level).

It localises to the cytoplasm. The protein localises to the cytoskeleton. Its subcellular location is the microtubule organizing center. It is found in the centrosome. The protein resides in the centriole. It localises to the cilium basal body. Functionally, centriole wall protein that localizes to mature centrioles and regulates centriole and cilia biogenesis. Involved in centrosome duplication: required for efficient PLK4 centrosomal localization and PLK4-induced overduplication of centrioles. Involved in cilium biogenesis and controls cilium length. Acts as a regulator of protein stability by preventing ubiquitination of centrosomal proteins, such as CCP110 and tektins. Associates with the EDVP complex, preventing ubiquitination and degradation of CCP110. Promotes deubiquitination of tektin proteins (TEKT1, TEKT2, TEK3, TEKT4 and TEKT5) via its interaction with USP16. The sequence is that of Centrosomal protein of 78 kDa from Homo sapiens (Human).